A 443-amino-acid polypeptide reads, in one-letter code: Proline--tRNA ligase (443 aa).

It belongs to the class-II aminoacyl-tRNA synthetase family. ProS type 2 subfamily. In terms of assembly, homodimer.

It is found in the cytoplasm. The enzyme catalyses tRNA(Pro) + L-proline + ATP = L-prolyl-tRNA(Pro) + AMP + diphosphate. Its function is as follows. Catalyzes the attachment of proline to tRNA(Pro) in a two-step reaction: proline is first activated by ATP to form Pro-AMP and then transferred to the acceptor end of tRNA(Pro). This Methylobacterium nodulans (strain LMG 21967 / CNCM I-2342 / ORS 2060) protein is Proline--tRNA ligase.